Consider the following 421-residue polypeptide: Indole-3-pyruvate monooxygenase YUCCA8 (421 aa).

30-35 (GAGPSG) is an FAD binding site. 201–206 (GCGNSG) contributes to the NADP(+) binding site.

It belongs to the FMO family. FAD serves as cofactor. As to expression, expressed in organs undergoing active growth and cell division.

The protein resides in the endoplasmic reticulum. It catalyses the reaction indole-3-pyruvate + NADPH + O2 + H(+) = (indol-3-yl)acetate + CO2 + NADP(+) + H2O. Its function is as follows. Involved in auxin biosynthesis. Converts the indole-3-pyruvic acid (IPA) produced by the TAA family to indole-3-acetic acid (IAA). Seems not able to use tryptamine (TAM) as substrate. Probably responsible for auxin biosynthesis in leaves and involved in the regulation of lateral leaf growth. Required for maintaining water homeostasis and an appropriate root to shoot ratio. Required for the inhibition of root growth by ethylene in etiolated seedlings. Functions downstream of the ethylene-response transcription factor EIL1. In Oryza sativa subsp. indica (Rice), this protein is Indole-3-pyruvate monooxygenase YUCCA8.